A 253-amino-acid chain; its full sequence is Aspartic acid-rich protein (253 aa).

An N-terminal signal peptide occupies residues M1–K22. Positions D211–D253 are disordered.

It belongs to the nucleosome assembly protein (NAP) family.

The protein is Aspartic acid-rich protein of Plasmodium falciparum (isolate fcm17 / Senegal).